Consider the following 626-residue polypeptide: UvrABC system protein C (626 aa).

The GIY-YIG domain maps to 25–104 (TSPGVYRFSN…IKELKPRYNV (80 aa)). The region spanning 218–253 (SALLRDLSAEMQKKAKELKFEEAAALKAQIEGLKRY) is the UVR domain.

Belongs to the UvrC family. As to quaternary structure, interacts with UvrB in an incision complex.

It localises to the cytoplasm. Functionally, the UvrABC repair system catalyzes the recognition and processing of DNA lesions. UvrC both incises the 5' and 3' sides of the lesion. The N-terminal half is responsible for the 3' incision and the C-terminal half is responsible for the 5' incision. In Chlorobaculum tepidum (strain ATCC 49652 / DSM 12025 / NBRC 103806 / TLS) (Chlorobium tepidum), this protein is UvrABC system protein C.